The sequence spans 102 residues: Circadian clock protein KaiB3 (102 aa).

It belongs to the KaiB family. In terms of assembly, purifies as a monomer and homotetramer. Interacts with KaiC1 and KaiC3.

Functionally, a paralog of KaiB1, the major clock oscillator protein in this species. KaiB3 and KaiC3 may cross talk with the core oscillator. The monomer reduces the ATPase activity of KaiC3 by 55%, the homotetramer has no effect. A metamorphic protein which may reversibly switch between an inactive tetrameric fold and a rare thioredoxin-like monomeric fold (KaiB(fs)). The protein is Circadian clock protein KaiB3 of Synechocystis sp. (strain ATCC 27184 / PCC 6803 / Kazusa).